We begin with the raw amino-acid sequence, 268 residues long: Tryptophan synthase alpha chain (268 aa).

Active-site proton acceptor residues include Glu-40 and Asp-51.

It belongs to the TrpA family. Tetramer of two alpha and two beta chains.

The enzyme catalyses (1S,2R)-1-C-(indol-3-yl)glycerol 3-phosphate + L-serine = D-glyceraldehyde 3-phosphate + L-tryptophan + H2O. The protein operates within amino-acid biosynthesis; L-tryptophan biosynthesis; L-tryptophan from chorismate: step 5/5. Its function is as follows. The alpha subunit is responsible for the aldol cleavage of indoleglycerol phosphate to indole and glyceraldehyde 3-phosphate. The protein is Tryptophan synthase alpha chain of Geobacillus kaustophilus (strain HTA426).